The following is a 282-amino-acid chain: Nucleotide-binding protein XAC2976 (282 aa).

Gly5 to Ser12 lines the ATP pocket. Asp57 to Ser60 provides a ligand contact to GTP.

Belongs to the RapZ-like family.

In terms of biological role, displays ATPase and GTPase activities. In Xanthomonas axonopodis pv. citri (strain 306), this protein is Nucleotide-binding protein XAC2976.